A 386-amino-acid chain; its full sequence is Formate-dependent phosphoribosylglycinamide formyltransferase (386 aa).

N(1)-(5-phospho-beta-D-ribosyl)glycinamide is bound by residues 15–16 and E75; that span reads EL. Residues R107, K148, 153-158, 188-191, and E196 each bind ATP; these read SSGKGQ and EQFI. Positions 112-301 constitute an ATP-grasp domain; it reads ALAAQQLNLQ…EFELHLRAIV (190 aa). E260 and E272 together coordinate Mg(2+). Residues D279, K349, and 356–357 each bind N(1)-(5-phospho-beta-D-ribosyl)glycinamide; that span reads RR.

Belongs to the PurK/PurT family. In terms of assembly, homodimer.

It carries out the reaction N(1)-(5-phospho-beta-D-ribosyl)glycinamide + formate + ATP = N(2)-formyl-N(1)-(5-phospho-beta-D-ribosyl)glycinamide + ADP + phosphate + H(+). It functions in the pathway purine metabolism; IMP biosynthesis via de novo pathway; N(2)-formyl-N(1)-(5-phospho-D-ribosyl)glycinamide from N(1)-(5-phospho-D-ribosyl)glycinamide (formate route): step 1/1. Its function is as follows. Involved in the de novo purine biosynthesis. Catalyzes the transfer of formate to 5-phospho-ribosyl-glycinamide (GAR), producing 5-phospho-ribosyl-N-formylglycinamide (FGAR). Formate is provided by PurU via hydrolysis of 10-formyl-tetrahydrofolate. The protein is Formate-dependent phosphoribosylglycinamide formyltransferase of Francisella tularensis subsp. tularensis (strain WY96-3418).